The primary structure comprises 120 residues: NAD(P)H-quinone oxidoreductase subunit 3, chloroplastic (120 aa).

Helical transmembrane passes span 9–29 (IFWAFLIISSVIPIFAFIISG), 60–80 (ICYYMFALVFVVFDVETVFLY), and 88–108 (ILGVSVFIEALIFVLILIVGS).

The protein belongs to the complex I subunit 3 family. NDH is composed of at least 16 different subunits, 5 of which are encoded in the nucleus.

Its subcellular location is the plastid. The protein resides in the chloroplast thylakoid membrane. It catalyses the reaction a plastoquinone + NADH + (n+1) H(+)(in) = a plastoquinol + NAD(+) + n H(+)(out). The catalysed reaction is a plastoquinone + NADPH + (n+1) H(+)(in) = a plastoquinol + NADP(+) + n H(+)(out). Its function is as follows. NDH shuttles electrons from NAD(P)H:plastoquinone, via FMN and iron-sulfur (Fe-S) centers, to quinones in the photosynthetic chain and possibly in a chloroplast respiratory chain. The immediate electron acceptor for the enzyme in this species is believed to be plastoquinone. Couples the redox reaction to proton translocation, and thus conserves the redox energy in a proton gradient. The chain is NAD(P)H-quinone oxidoreductase subunit 3, chloroplastic from Morus indica (Mulberry).